The following is a 182-amino-acid chain: Peptide methionine sulfoxide reductase MsrA (182 aa).

C13 is an active-site residue.

It belongs to the MsrA Met sulfoxide reductase family.

The catalysed reaction is L-methionyl-[protein] + [thioredoxin]-disulfide + H2O = L-methionyl-(S)-S-oxide-[protein] + [thioredoxin]-dithiol. The enzyme catalyses [thioredoxin]-disulfide + L-methionine + H2O = L-methionine (S)-S-oxide + [thioredoxin]-dithiol. Its function is as follows. Has an important function as a repair enzyme for proteins that have been inactivated by oxidation. Catalyzes the reversible oxidation-reduction of methionine sulfoxide in proteins to methionine. In Mycobacterium bovis (strain ATCC BAA-935 / AF2122/97), this protein is Peptide methionine sulfoxide reductase MsrA.